The chain runs to 44 residues: Putative protein PsbN (44 aa).

A helical membrane pass occupies residues 3-23 (IISFLSTIFLGFFIISTTIYS).

The protein belongs to the PsbN family.

The protein resides in the plastid. The protein localises to the chloroplast thylakoid membrane. In terms of biological role, may play a role in photosystem I and II biogenesis. In Euglena gracilis, this protein is Putative protein PsbN.